The following is a 544-amino-acid chain: MSRFTEKMFHNARTATTGMVTGEPHMPVRHTWGEVHERARCIAGGLAAAGVGLGDVVGVLAGFPVEIAPTAQALWMRGASLTMLHQPTPRTDLAVWAEDTMTVIGMIEAKAVIVSEPFLVAIPILEQKGMQVLTVADLLASDPIGPIEVGEDDLALMQLTSGSTGSPKAVQITHRNIYSNAEAMFVGAQYDVDKDVMVSWLPCFHDMGMVGFLTIPMFFGAELVKVTPMDFLRDTLLWAKLIDKYQGTMTAAPNFAYALLAKRLRRQAKPGDFDLSTLRFALSGAEPVEPADVEDLLDAGKPFGLRPSAILPAYGMAETTLAVSFSECNAGLVVDEVDADLLAALRRAVPATKGNTRRLATLGPLLQDLEARIIDEQGDVMPARGVGVIELRGESLTPGYLTMGGFIPAQDEHGWYDTGDLGYLTEEGHVVVCGRVKDVIIMAGRNIYPTDIERAAGRVDGVRPGCAVAVRLDAGHSRESFAVAVESNAFEDPAEVRRIEHQVAHEVVAEVDVRPRNVVVLGPGTIPKTPSGKLRRANSVTLVT.

An Isoglutamyl lysine isopeptide (Lys-Gln) (interchain with Q-Cter in protein Pup) cross-link involves residue Lys528.

Belongs to the ATP-dependent AMP-binding enzyme family. Pupylated at Lys-528 by the prokaryotic ubiquitin-like protein Pup, which probably leads to its degradation by the proteasome.

This chain is Putative ligase Rv1013 (pks16), found in Mycobacterium tuberculosis (strain ATCC 25618 / H37Rv).